The chain runs to 418 residues: Somatostatin receptor type 3 (418 aa).

Positions 1-21 are disordered; it reads MDMLHPSSVSTTSEPENASSA. Topologically, residues 1 to 43 are extracellular; sequence MDMLHPSSVSTTSEPENASSAWPPDATLGNVSAGPSPAGLAVS. The span at 7 to 20 shows a compositional bias: polar residues; it reads SSVSTTSEPENASS. Residues N17 and N30 are each glycosylated (N-linked (GlcNAc...) asparagine). Residues 44–69 traverse the membrane as a helical segment; sequence GVLIPLVYLVVCVVGLLGNSLVIYVV. Over 70-79 the chain is Cytoplasmic; it reads LRHTASPSVT. Residues 80–101 traverse the membrane as a helical segment; that stretch reads NVYILNLALADELFMLGLPFLA. At 102–116 the chain is on the extracellular side; sequence AQNALSYWPFGSLMC. A disulfide bond links C116 and C191. The helical transmembrane segment at 117–138 threads the bilayer; it reads RLVMAVDGINQFTSIFCLTVMS. Over 139–161 the chain is Cytoplasmic; sequence VDRYLAVVHPTRSARWRTAPVAR. The chain crosses the membrane as a helical span at residues 162–181; sequence TVSAAVWVASAVVVLPVVVF. The Extracellular portion of the chain corresponds to 182 to 205; it reads SGVPRGMSTCHMQWPEPAAAWRAG. A helical transmembrane segment spans residues 206–231; sequence FIIYTAALGFFGPLLVICLCYLLIVV. Residues 232 to 257 are Cytoplasmic-facing; the sequence is KVRSAGRRVWAPSCQRRRRSERRVTR. A helical membrane pass occupies residues 258–279; that stretch reads MVVAVVALFVLCWMPFYVLNIV. Residues 280-293 are Extracellular-facing; it reads NVVCPLPEEPAFFG. The helical transmembrane segment at 294-316 threads the bilayer; the sequence is LYFLVVALPYANSCANPILYGFL. At 317-418 the chain is on the cytoplasmic side; sequence SYRFKQGFRR…KSSTMRISYL (102 aa). Phosphoserine is present on residues S332 and S337. The disordered stretch occupies residues 335–418; it reads VRSQEPTVGP…KSSTMRISYL (84 aa). T348 bears the Phosphothreonine mark. The span at 348–360 shows a compositional bias: acidic residues; it reads TEEEDEEEEDGEE. The span at 361 to 371 shows a compositional bias: basic and acidic residues; that stretch reads SREGGKGKEMN. 2 stretches are compositionally biased toward polar residues: residues 373–385 and 395–418; these read RVSQITQPGTSGQ and KEQQLLPQEASTGEKSSTMRISYL.

It belongs to the G-protein coupled receptor 1 family. Homodimer and heterodimer with SSTR2. Heterodimerization with SSTR2 inactivates SSTR3 receptor function. Post-translationally, phosphorylated. Phosphorylation increases upon somatostatin binding. Brain, pituitary and pancreas.

The protein localises to the cell membrane. Receptor for somatostatin-14 and -28. This receptor is coupled via pertussis toxin sensitive G proteins to inhibition of adenylyl cyclase. This chain is Somatostatin receptor type 3 (SSTR3), found in Homo sapiens (Human).